The following is a 210-amino-acid chain: Thiamine-phosphate synthase (210 aa).

4-amino-2-methyl-5-(diphosphooxymethyl)pyrimidine contacts are provided by residues 38 to 42 (QLREK) and N70. Mg(2+) contacts are provided by D71 and D90. S109 provides a ligand contact to 4-amino-2-methyl-5-(diphosphooxymethyl)pyrimidine. 2-[(2R,5Z)-2-carboxy-4-methylthiazol-5(2H)-ylidene]ethyl phosphate is bound at residue 139 to 141 (TPT). K142 contacts 4-amino-2-methyl-5-(diphosphooxymethyl)pyrimidine. 2-[(2R,5Z)-2-carboxy-4-methylthiazol-5(2H)-ylidene]ethyl phosphate-binding positions include G170 and 190–191 (VS).

Belongs to the thiamine-phosphate synthase family. Mg(2+) is required as a cofactor.

It carries out the reaction 2-[(2R,5Z)-2-carboxy-4-methylthiazol-5(2H)-ylidene]ethyl phosphate + 4-amino-2-methyl-5-(diphosphooxymethyl)pyrimidine + 2 H(+) = thiamine phosphate + CO2 + diphosphate. The enzyme catalyses 2-(2-carboxy-4-methylthiazol-5-yl)ethyl phosphate + 4-amino-2-methyl-5-(diphosphooxymethyl)pyrimidine + 2 H(+) = thiamine phosphate + CO2 + diphosphate. The catalysed reaction is 4-methyl-5-(2-phosphooxyethyl)-thiazole + 4-amino-2-methyl-5-(diphosphooxymethyl)pyrimidine + H(+) = thiamine phosphate + diphosphate. It participates in cofactor biosynthesis; thiamine diphosphate biosynthesis; thiamine phosphate from 4-amino-2-methyl-5-diphosphomethylpyrimidine and 4-methyl-5-(2-phosphoethyl)-thiazole: step 1/1. Condenses 4-methyl-5-(beta-hydroxyethyl)thiazole monophosphate (THZ-P) and 2-methyl-4-amino-5-hydroxymethyl pyrimidine pyrophosphate (HMP-PP) to form thiamine monophosphate (TMP). The chain is Thiamine-phosphate synthase from Leptospira biflexa serovar Patoc (strain Patoc 1 / Ames).